The chain runs to 378 residues: Queuine tRNA-ribosyltransferase (378 aa).

Aspartate 91 (proton acceptor) is an active-site residue. Substrate contacts are provided by residues 91–95 (DSGGF), aspartate 145, glutamine 189, and glycine 216. The tract at residues 247–253 (GVGKPED) is RNA binding. The active-site Nucleophile is the aspartate 266. Positions 271 to 275 (TRNAR) are RNA binding; important for wobble base 34 recognition. Zn(2+)-binding residues include cysteine 304, cysteine 306, cysteine 309, and histidine 335.

It belongs to the queuine tRNA-ribosyltransferase family. As to quaternary structure, homodimer. Within each dimer, one monomer is responsible for RNA recognition and catalysis, while the other monomer binds to the replacement base PreQ1. The cofactor is Zn(2+).

The catalysed reaction is 7-aminomethyl-7-carbaguanine + guanosine(34) in tRNA = 7-aminomethyl-7-carbaguanosine(34) in tRNA + guanine. The protein operates within tRNA modification; tRNA-queuosine biosynthesis. In terms of biological role, catalyzes the base-exchange of a guanine (G) residue with the queuine precursor 7-aminomethyl-7-deazaguanine (PreQ1) at position 34 (anticodon wobble position) in tRNAs with GU(N) anticodons (tRNA-Asp, -Asn, -His and -Tyr). Catalysis occurs through a double-displacement mechanism. The nucleophile active site attacks the C1' of nucleotide 34 to detach the guanine base from the RNA, forming a covalent enzyme-RNA intermediate. The proton acceptor active site deprotonates the incoming PreQ1, allowing a nucleophilic attack on the C1' of the ribose to form the product. After dissociation, two additional enzymatic reactions on the tRNA convert PreQ1 to queuine (Q), resulting in the hypermodified nucleoside queuosine (7-(((4,5-cis-dihydroxy-2-cyclopenten-1-yl)amino)methyl)-7-deazaguanosine). The polypeptide is Queuine tRNA-ribosyltransferase (Vibrio atlanticus (strain LGP32) (Vibrio splendidus (strain Mel32))).